We begin with the raw amino-acid sequence, 164 residues long: NADH-quinone oxidoreductase subunit I (164 aa).

4Fe-4S ferredoxin-type domains are found at residues 55 to 85 (LRRYPNGEERCIACKLCEAVCPAQAITIDAE) and 95 to 124 (TRYDIDMTKCIYCGFCQEACPVDAIVEGPN). 8 residues coordinate [4Fe-4S] cluster: cysteine 65, cysteine 68, cysteine 71, cysteine 75, cysteine 104, cysteine 107, cysteine 110, and cysteine 114.

Belongs to the complex I 23 kDa subunit family. As to quaternary structure, NDH-1 is composed of 14 different subunits. Subunits NuoA, H, J, K, L, M, N constitute the membrane sector of the complex. It depends on [4Fe-4S] cluster as a cofactor.

The protein localises to the cell inner membrane. It catalyses the reaction a quinone + NADH + 5 H(+)(in) = a quinol + NAD(+) + 4 H(+)(out). Its function is as follows. NDH-1 shuttles electrons from NADH, via FMN and iron-sulfur (Fe-S) centers, to quinones in the respiratory chain. The immediate electron acceptor for the enzyme in this species is believed to be ubiquinone. Couples the redox reaction to proton translocation (for every two electrons transferred, four hydrogen ions are translocated across the cytoplasmic membrane), and thus conserves the redox energy in a proton gradient. In Ruegeria sp. (strain TM1040) (Silicibacter sp.), this protein is NADH-quinone oxidoreductase subunit I.